Consider the following 331-residue polypeptide: Cathepsin 7 (331 aa).

The N-terminal stretch at methionine 1 to alanine 17 is a signal peptide. The propeptide at alanine 18–lysine 111 is activation peptide. Positions lysine 33–alanine 50 match the Nuclear localization signal motif. Asparagine 72 carries an N-linked (GlcNAc...) asparagine glycan. 3 disulfides stabilise this stretch: cysteine 133/cysteine 176, cysteine 167/cysteine 209, and cysteine 267/cysteine 320. Cysteine 136 is an active-site residue. Active-site residues include histidine 274 and asparagine 298.

Belongs to the peptidase C1 family.

Its subcellular location is the endosome. It is found in the lysosome. The protein localises to the cytoplasm. It localises to the perinuclear region. The protein resides in the golgi apparatus. Its subcellular location is the nucleus. It is found in the secreted. The protein localises to the extracellular space. Its function is as follows. Involved in trophoblast cell proliferation and differentiation probably by affecting mitotic cell cycle progression. Proteolytic activity and nuclear localization are essential for its role in cell cycle progression. This chain is Cathepsin 7 (Cts7), found in Rattus norvegicus (Rat).